Here is a 359-residue protein sequence, read N- to C-terminus: METQLSNGPTCNNTANGPTTVNNNCSSPVDSGNTEDSKTNLIDNYLPQNMTQEELKSLFGSIGEIESCKLVRDKITGQSLGYGFVNYIDPKDAEKAINTLNGLRLQTKTIKVSYARPSSASIRDANLYVSGLPKTMTQKELEQLFSQYGRIITSRILVDQVTGISRGVGFIRFDKRIEAEEAIKGLNGQKPPGATEPITVKFANNPSQKTNQAILSQLYQSPNRRYPGPLAQQAQRFRLDNLLNMAYGVKRFSPMTIDGMTSLAGINIPGHPGTGWCIFVYNLAPDADESILWQMFGPFGAVTNVKVIRDFNTNKCKGFGFVTMTNYDEAAMAIASLNGYRLGDRVLQVSFKTNKTHKA.

The tract at residues M1–T39 is disordered. RRM domains follow at residues T39–P117 and A125–N205. S221 is modified (phosphoserine). Positions W276–N354 constitute an RRM 3 domain.

It belongs to the RRM elav family. In terms of assembly, interacts with IGF2BP1. Interacts with MAP1B light chain LC1.

Its function is as follows. RNA-binding protein that binds to the 3' untranslated region (3'UTR) of target mRNAs. Seems to recognize a GAAA motif. Can bind to its own 3'UTR, the FOS 3'UTR and the ID 3'UTR. The polypeptide is ELAV-like protein 2 (Elavl2) (Rattus norvegicus (Rat)).